Reading from the N-terminus, the 448-residue chain is MMIKIYDTMTRSLREFVPITDKVVNMYVCGPTVYNYIHIGNARSAVAFDTVRRYFEYAGYTVNYISNFTDVDDKIIKAAKEAGLSPKQLADQFIAAFMEDTKALGVKPATKNPRVMDYMDEIIAFIAALIKKGYAYESAGDVYFRVAKASNYARLANKTIADLEAGASGRTDTETALKENPLDFALWKSAKPGEVSWTSPWSAGRPGWHIECSVMATELLGDTIDIHGGGADLEFPHHTNEIAQSEAKTSKTFANYWMHNGFVNVDNEKMSKSLGNFVTVHDLLKTVDGQTLRFFLATQHYRKPINFTEKAIHDAEVNLKYLKNTLQQPTVATADSSQLAAFVTAFKAAMNDDFNTANGITVLFDMAKWINSGAYSEAVKSAFEEMLAVFGIVFEAESLDTEIEQLIAERQEARANRDFAKADAIRDQLAAQGIKLLDTKDGVRWIRD.

C29 serves as a coordination point for Zn(2+). The 'HIGH' region motif lies at P31–N41. C212, H237, and E241 together coordinate Zn(2+). A 'KMSKS' region motif is present at residues K269–S273. An ATP-binding site is contributed by K272.

Belongs to the class-I aminoacyl-tRNA synthetase family. Monomer. The cofactor is Zn(2+).

It localises to the cytoplasm. It catalyses the reaction tRNA(Cys) + L-cysteine + ATP = L-cysteinyl-tRNA(Cys) + AMP + diphosphate. The polypeptide is Cysteine--tRNA ligase (Streptococcus equi subsp. zooepidemicus (strain MGCS10565)).